Reading from the N-terminus, the 333-residue chain is Aspartate carbamoyltransferase catalytic subunit (333 aa).

Residues arginine 61 and threonine 62 each contribute to the carbamoyl phosphate site. Lysine 89 serves as a coordination point for L-aspartate. Carbamoyl phosphate contacts are provided by arginine 111, histidine 144, and glutamine 147. The L-aspartate site is built by arginine 184 and arginine 248. Carbamoyl phosphate contacts are provided by glycine 289 and proline 290.

This sequence belongs to the aspartate/ornithine carbamoyltransferase superfamily. ATCase family. In terms of assembly, heterododecamer (2C3:3R2) of six catalytic PyrB chains organized as two trimers (C3), and six regulatory PyrI chains organized as three dimers (R2).

It carries out the reaction carbamoyl phosphate + L-aspartate = N-carbamoyl-L-aspartate + phosphate + H(+). It participates in pyrimidine metabolism; UMP biosynthesis via de novo pathway; (S)-dihydroorotate from bicarbonate: step 2/3. Functionally, catalyzes the condensation of carbamoyl phosphate and aspartate to form carbamoyl aspartate and inorganic phosphate, the committed step in the de novo pyrimidine nucleotide biosynthesis pathway. In Trichormus variabilis (strain ATCC 29413 / PCC 7937) (Anabaena variabilis), this protein is Aspartate carbamoyltransferase catalytic subunit.